A 228-amino-acid chain; its full sequence is Thermonuclease (228 aa).

Residues 1 to 23 (MTEYLLSAGICMAIVSILLIGMA) form the signal peptide. The propeptide occupies 24–60 (ISNVSKGQYAKRFFFFATSCLVLTLVVVSSLSSSANA). Ca(2+) is bound at residue Asp100. Arg114 is an active-site residue. Ca(2+)-binding residues include Asp119 and Thr120. Active-site residues include Glu122 and Arg166.

The protein belongs to the thermonuclease family. The cofactor is Ca(2+).

The protein localises to the secreted. It carries out the reaction Endonucleolytic cleavage to nucleoside 3'-phosphates and 3'-phosphooligonucleotide end-products.. Enzyme that catalyzes the hydrolysis of both DNA and RNA at the 5' position of the phosphodiester bond. The polypeptide is Thermonuclease (nuc) (Staphylococcus aureus (strain MSSA476)).